Here is a 453-residue protein sequence, read N- to C-terminus: MSSSSLPTKSSNALLSVNFNQDHSCIAVGTRDGYSITNCEPFGRVYTNNAGPTSLVEMLFCTSLVALVATSDTDPKSNASPRRLQIVNTKRQSVICELLFPTAILGVKLNRRRLVVVLEQEIYIYDISNMKLLHTIETSPNPMAICALSPSSENCFLAYPSPVASPTSPFSNSGASSSAEANTTAGDVLIFDLLSLSVTNVIQAHKTPISALALNATGTLLATASDKGTVIRVFSIPAAQKLHQFRRGSYAARIYSLNFNAVSTLLAVSSDTETVHIFKLSSGAGAGAKGRSSSNGGESPSLNSFDGSSDSSSPPGSTTNATRGGYEAFMGKHKAAKSNGISGTLRRRSMALGRGITGSVGGYLPNSLTEMWEPSRDFAFLKLPSQGVSSVVALSSTTPHVMVVTSEGYFYSYAIDLEHGGECILMKQYSLIDPDLDTTSTARSDTATPSLAD.

WD repeat units follow at residues 9-49 (KSSN…YTNN), 204-244 (AHKT…KLHQ), and 249-288 (SYAA…GAGA). The short motif at 245 to 249 (FRRGS) is the L/FRRG motif element. The segment at 284 to 324 (AGAGAKGRSSSNGGESPSLNSFDGSSDSSSPPGSTTNATRG) is disordered. Residues 289 to 320 (KGRSSSNGGESPSLNSFDGSSDSSSPPGSTTN) show a composition bias toward low complexity.

This sequence belongs to the WD repeat PROPPIN family. In terms of assembly, component of the PI(3,5)P2 regulatory complex.

It is found in the preautophagosomal structure membrane. The protein resides in the vacuole membrane. The protein localises to the endosome membrane. The PI(3,5)P2 regulatory complex regulates both the synthesis and turnover of phosphatidylinositol 3,5-bisphosphate (PtdIns(3,5)P2). Necessary for proper vacuole morphology. Plays an important role in osmotically-induced vacuole fragmentation. Required for cytoplasm to vacuole transport (Cvt) vesicle formation, pexophagy and starvation-induced autophagy. Involved in correct ATG9 trafficking to the pre-autophagosomal structure. Might also be involved in premeiotic DNA replication. This Mycosarcoma maydis (Corn smut fungus) protein is Autophagy-related protein 18 (ATG18).